A 104-amino-acid polypeptide reads, in one-letter code: Toxin-like protein 14 (104 aa).

The first 25 residues, 1 to 25, serve as a signal peptide directing secretion; the sequence is MNTYNARLYIFSLALALVILKGTKC.

Post-translationally, contains 4 disulfide bonds. Expressed by the venom gland.

Its subcellular location is the secreted. This chain is Toxin-like protein 14, found in Urodacus yaschenkoi (Inland robust scorpion).